We begin with the raw amino-acid sequence, 261 residues long: MTYNPRIGGFTHVKQASFDVHVKRGEAQPRTSFAQQIKRIFSKIGETLGQLFRHRAPDSAPGRVRLQGVRYVGSYRPTGDAKQAIRHFVDEAVKQVAHARTPEIRQDAEFGRQVYEATLCAIFSEAKDRFCMDPATRAGNVRPAFIEALGDAARATGLPGADKQGVFTPSGAGTNPLYTEIRLRADTLMGAELAARPEYRELQPYARQQAIDLVANALPAERSNTLVEFRQTVQTLEATYRRAAQDASRDEKGATNAADGA.

The protein belongs to the GEF (guanine exchange factor) SopE family. Monomer. Interacts with human CDC42.

It is found in the secreted. Functionally, activator for both CDC42 and RAC1 by directly interacting with these Rho GTPases and acting as a guanine nucleotide exchange factor (GEF). This activation results in actin cytoskeleton rearrangements and stimulates membrane ruffling, thus promoting bacterial entry into non-phagocytic cells. The protein is Guanine nucleotide exchange factor BopE (bopE) of Burkholderia pseudomallei (strain 1710b).